The chain runs to 345 residues: Sulfate/thiosulfate import ATP-binding protein CysA (345 aa).

The region spanning 3–237 is the ABC transporter domain; that stretch reads IQVSGLCKHF…PRTEFVYQFV (235 aa). 35–42 is a binding site for ATP; it reads GPSGCGKT.

Belongs to the ABC transporter superfamily. Sulfate/tungstate importer (TC 3.A.1.6) family. As to quaternary structure, the complex is composed of two ATP-binding proteins (CysA), two transmembrane proteins (CysT and CysW) and a solute-binding protein (CysP).

It is found in the cell inner membrane. It catalyses the reaction sulfate(out) + ATP + H2O = sulfate(in) + ADP + phosphate + H(+). The enzyme catalyses thiosulfate(out) + ATP + H2O = thiosulfate(in) + ADP + phosphate + H(+). Its function is as follows. Part of the ABC transporter complex CysAWTP involved in sulfate/thiosulfate import. Responsible for energy coupling to the transport system. The polypeptide is Sulfate/thiosulfate import ATP-binding protein CysA (Vibrio vulnificus (strain CMCP6)).